Consider the following 28-residue polypeptide: N-acetyl-D-galactosamine-binding lectin subunit A (28 aa).

The protein belongs to the ribosome-inactivating protein family. In terms of assembly, disulfide-linked heterodimer of A and B chains.

It catalyses the reaction Endohydrolysis of the N-glycosidic bond at one specific adenosine on the 28S rRNA.. Its function is as follows. Gal / GalNAc-specific lectin. Agglutinates both native and trypsin-treated rabbit erythrocytes but not human erythrocytes irrespective of blood group type. This chain is N-acetyl-D-galactosamine-binding lectin subunit A, found in Iris hollandica (Dutch iris).